The chain runs to 103 residues: Small ribosomal subunit protein uS10 (103 aa).

It belongs to the universal ribosomal protein uS10 family. Part of the 30S ribosomal subunit.

In terms of biological role, involved in the binding of tRNA to the ribosomes. The polypeptide is Small ribosomal subunit protein uS10 (Neisseria gonorrhoeae (strain ATCC 700825 / FA 1090)).